A 145-amino-acid polypeptide reads, in one-letter code: Cytochrome c2 (145 aa).

An N-terminal signal peptide occupies residues 1 to 21 (MKFQVKALAAIAAFAALPALA). Position 22 is a pyrrolidone carboxylic acid (Gln-22). Residues Cys-36, Cys-39, His-40, and Met-121 each coordinate heme c.

It belongs to the cytochrome c family. In terms of processing, binds 1 heme c group covalently per subunit.

The protein resides in the periplasm. Cytochrome c2 is found mainly in purple, non-sulfur, photosynthetic bacteria where it functions as the electron donor to the oxidized bacteriochlorophyll in the photophosphorylation pathway. However, it may also have a role in the respiratory chain and is found in some non-photosynthetic bacteria. The chain is Cytochrome c2 (cycA) from Cereibacter sphaeroides (strain ATCC 17023 / DSM 158 / JCM 6121 / CCUG 31486 / LMG 2827 / NBRC 12203 / NCIMB 8253 / ATH 2.4.1.) (Rhodobacter sphaeroides).